The primary structure comprises 179 residues: Nucleoside-triphosphatase THEP1 (179 aa).

ATP-binding positions include 7–14 (GRPGVGKT) and 94–101 (LIIVDEIG).

This sequence belongs to the THEP1 NTPase family.

It carries out the reaction a ribonucleoside 5'-triphosphate + H2O = a ribonucleoside 5'-diphosphate + phosphate + H(+). Functionally, has nucleotide phosphatase activity towards ATP, GTP, CTP, TTP and UTP. May hydrolyze nucleoside diphosphates with lower efficiency. In Thermotoga petrophila (strain ATCC BAA-488 / DSM 13995 / JCM 10881 / RKU-1), this protein is Nucleoside-triphosphatase THEP1.